A 393-amino-acid polypeptide reads, in one-letter code: F-box/kelch-repeat protein At4g19865 (393 aa).

The interval 1 to 30 (MNFQVEPPEKKKTKNSSPPHSPPSSSSPSL) is disordered. Positions 27–73 (SPSLSLLPEEIVVHCLARISRLYYPTLSLVSKSFRSILSSTELYATR) constitute an F-box domain. Kelch repeat units follow at residues 148–190 (EIYV…FHDG), 191–237 (KIYV…RSGV), 239–272 (EGKI…ALRS), and 273–320 (ECMI…GGSS).

The sequence is that of F-box/kelch-repeat protein At4g19865 from Arabidopsis thaliana (Mouse-ear cress).